Consider the following 76-residue polypeptide: uncharacterized protein (76 aa).

This is an uncharacterized protein from Thermoproteus tenax virus 1 (strain KRA1) (TTV1).